A 465-amino-acid polypeptide reads, in one-letter code: Fujikurins efflux protein FFUJ_12242 (465 aa).

The segment at 1–66 (MATNVGGAVD…AAKAHDEGPP (66 aa)) is disordered. Basic and acidic residues predominate over residues 11-28 (NSRRSISDNRHDPEKPAE). A run of 7 helical transmembrane segments spans residues 70 to 90 (TAAW…PGWI), 115 to 135 (WIPS…GIIF), 142 to 162 (PLII…SLAK), 175 to 195 (SAIG…TWFL), 200 to 220 (AAMG…PIMI), 231 to 251 (WALR…CLTV), and 274 to 294 (PAFA…YIPI). A glycan (N-linked (GlcNAc...) asparagine) is linked at N310. 5 helical membrane-spanning segments follow: residues 314–334 (YLVA…GYGA), 342–362 (MFII…IPAT), 368–388 (IGYA…VGAL), 404–424 (IVFL…GAIL), and 430–450 (GWVS…AIIL).

It belongs to the major facilitator superfamily. Monocarboxylate porter (TC 2.A.1.13) family.

It is found in the cell membrane. Functionally, efflux pump that may be involved in the secretion of fujikurins. The polypeptide is Fujikurins efflux protein FFUJ_12242 (Gibberella fujikuroi (strain CBS 195.34 / IMI 58289 / NRRL A-6831) (Bakanae and foot rot disease fungus)).